The primary structure comprises 514 residues: tRNA-2-methylthio-N(6)-dimethylallyladenosine synthase (514 aa).

Residues 68 to 186 (RTFLIKTYGC…LPEILEEAYL (119 aa)) enclose the MTTase N-terminal domain. Residues cysteine 77, cysteine 113, cysteine 147, cysteine 223, cysteine 227, and cysteine 230 each contribute to the [4Fe-4S] cluster site. The region spanning 209-439 (RDGHIKAWVN…NKKVGIYSQQ (231 aa)) is the Radical SAM core domain. Positions 442-505 (SQYEGKIVTV…QYSLNGTFIQ (64 aa)) constitute a TRAM domain.

Belongs to the methylthiotransferase family. MiaB subfamily. In terms of assembly, monomer. [4Fe-4S] cluster serves as cofactor.

It is found in the cytoplasm. It carries out the reaction N(6)-dimethylallyladenosine(37) in tRNA + (sulfur carrier)-SH + AH2 + 2 S-adenosyl-L-methionine = 2-methylsulfanyl-N(6)-dimethylallyladenosine(37) in tRNA + (sulfur carrier)-H + 5'-deoxyadenosine + L-methionine + A + S-adenosyl-L-homocysteine + 2 H(+). In terms of biological role, catalyzes the methylthiolation of N6-(dimethylallyl)adenosine (i(6)A), leading to the formation of 2-methylthio-N6-(dimethylallyl)adenosine (ms(2)i(6)A) at position 37 in tRNAs that read codons beginning with uridine. The sequence is that of tRNA-2-methylthio-N(6)-dimethylallyladenosine synthase from Staphylococcus epidermidis (strain ATCC 35984 / DSM 28319 / BCRC 17069 / CCUG 31568 / BM 3577 / RP62A).